The sequence spans 896 residues: Zinc finger protein 574 (896 aa).

C2H2-type zinc fingers lie at residues 16–38 (YVCS…QNSH), 76–98 (YQCL…QELH), and 126–148 (YECV…RQTH). S164 is subject to Phosphoserine. The C2H2-type 4 zinc-finger motif lies at 214-236 (YKCSECSQLFQLPADFLEHQATH). The tract at residues 239-301 (APVPESQEPA…RARRNNSGEA (63 aa)) is disordered. The span at 247-257 (PALQQEVQASS) shows a compositional bias: polar residues. The segment covering 274 to 287 (HSYELRNGEAIGRD) has biased composition (basic and acidic residues). S298 is subject to Phosphoserine. 4 consecutive C2H2-type zinc fingers follow at residues 309-331 (LFCS…LRSH), 336-358 (FKCP…LGDH), 364-386 (FLCV…RRAH), and 392-413 (HSCP…RRTH). The tract at residues 434–460 (FPEPAPAETGEPEAPEPPVSEETSAGP) is disordered. C2H2-type zinc fingers lie at residues 466–489 (YRCL…RFVH), 495–517 (HKCS…LRTH), 523–545 (FPCP…RLTH), 551–573 (YRCG…RLVH), 579–601 (YRCQ…RYHH), and 607–630 (YKCR…LVVH). The C2H2-type 15; degenerate zinc-finger motif lies at 636–659 (HRCPSCGAAFPSSLRLREHRCAAA). The C2H2-type 16 zinc-finger motif lies at 667–689 (FECGTCGKKVGSAARLQAHEAAH). Residues 687 to 733 (AAHAAAGPGEVLAKEPPAPRAPRATRAPVASPAGLGGTATASPAAPA) form a disordered region. Residues 707–732 (APRATRAPVASPAGLGGTATASPAAP) are compositionally biased toward low complexity. S717 carries the phosphoserine modification. T724 carries the phosphothreonine modification. Position 728 is a phosphoserine (S728). 4 C2H2-type zinc fingers span residues 738-760 (LECS…RRIH), 766-788 (YPCP…RRLH), 794-816 (FACE…RRIH), and 822-844 (YSCP…RKTH). At R832 the chain carries Asymmetric dimethylarginine.

It belongs to the krueppel C2H2-type zinc-finger protein family.

It is found in the nucleus. Functionally, may be involved in transcriptional regulation. The protein is Zinc finger protein 574 (ZNF574) of Macaca fascicularis (Crab-eating macaque).